Consider the following 204-residue polypeptide: Urease accessory protein UreG (204 aa).

13 to 20 (GPVGSGKT) serves as a coordination point for GTP.

It belongs to the SIMIBI class G3E GTPase family. UreG subfamily. As to quaternary structure, homodimer. UreD, UreF and UreG form a complex that acts as a GTP-hydrolysis-dependent molecular chaperone, activating the urease apoprotein by helping to assemble the nickel containing metallocenter of UreC. The UreE protein probably delivers the nickel.

It is found in the cytoplasm. In terms of biological role, facilitates the functional incorporation of the urease nickel metallocenter. This process requires GTP hydrolysis, probably effectuated by UreG. The protein is Urease accessory protein UreG of Acinetobacter baumannii (strain AB307-0294).